Here is a 550-residue protein sequence, read N- to C-terminus: Hydroxylamine reductase (550 aa).

Cys-7, Cys-10, Cys-19, and Cys-25 together coordinate [4Fe-4S] cluster. Residues His-244, Glu-268, Cys-312, Cys-405, Cys-433, Cys-458, Glu-493, and Lys-495 each coordinate hybrid [4Fe-2O-2S] cluster. Cys-405 is modified (cysteine persulfide).

This sequence belongs to the HCP family. The cofactor is [4Fe-4S] cluster. Hybrid [4Fe-2O-2S] cluster serves as cofactor.

The protein resides in the cytoplasm. It catalyses the reaction A + NH4(+) + H2O = hydroxylamine + AH2 + H(+). Catalyzes the reduction of hydroxylamine to form NH(3) and H(2)O. The chain is Hydroxylamine reductase from Porphyromonas gingivalis (strain ATCC 33277 / DSM 20709 / CIP 103683 / JCM 12257 / NCTC 11834 / 2561).